We begin with the raw amino-acid sequence, 474 residues long: Selection and upkeep of intraepithelial T-cells protein 4 (474 aa).

The first 25 residues, 1–25, serve as a signal peptide directing secretion; it reads MGATEVLTSYCVVLCLLQMVALSSG. Residues 26-241 lie on the Extracellular side of the membrane; sequence HFTVIGSQRP…VLSGELFSWK (216 aa). An Ig-like V-type domain is found at 27–140; sequence FTVIGSQRPI…EEHITEVKVT (114 aa). 2 disulfide bridges follow: Cys48–Cys122 and Cys162–Cys216. Asn111 and Asn199 each carry an N-linked (GlcNAc...) asparagine glycan. Positions 141–234 constitute an Ig-like C1-type domain; the sequence is ATSSDIQILM…QEQSINIVLS (94 aa). Residues 242 to 262 traverse the membrane as a helical segment; it reads IVWIMILSTISFVMIDFCMTY. The Cytoplasmic portion of the chain corresponds to 263 to 298; that stretch reads CVQQQLIHEESLSTVDNDQCESDQSEGTCYKRNYPW. A helical membrane pass occupies residues 299-319; that stretch reads IIIAVVPIISVFAIIGVMLFL. The Extracellular portion of the chain corresponds to 320 to 341; that stretch reads HLEQRVTILEQHFELDTLWLED. A helical membrane pass occupies residues 342-362; sequence ISVILCVVIVSNINLIPLIYF. The Cytoplasmic segment spans residues 363–381; that stretch reads RLHEHVPRFKDRSPILNKA. A helical transmembrane segment spans residues 382–402; that stretch reads VVFLHFIYFSIVCGTILLVHL. The Extracellular portion of the chain corresponds to 403 to 420; sequence QLRNKVSISDSLFSLYNS. Residues 421-441 traverse the membrane as a helical segment; the sequence is WLTDISMILGFLLSIFIVTTI. Residues 442-474 are Cytoplasmic-facing; sequence AKSSLFNKKWCIGLCIHMKEAEATGGPCEGEEL.

Belongs to the SKINT family. Expressed in skin, thymus and, to a lower extent, bladder and testis.

The protein localises to the membrane. May act by engaging a cell surface molecule on immature T-cells in the embryonic thymus. In Mus musculus (Mouse), this protein is Selection and upkeep of intraepithelial T-cells protein 4 (Skint4).